The following is a 199-amino-acid chain: NAD(P)H dehydrogenase (quinone) (199 aa).

The 187-residue stretch at 4-190 (VLVLYYSSYG…TGARYQGRKI (187 aa)) folds into the Flavodoxin-like domain. FMN is bound by residues 10 to 15 (SSYGHL) and 78 to 80 (TRF). Tyr12 is a binding site for NAD(+). Trp98 is a substrate binding site. FMN-binding positions include 113 to 119 (STATQHG) and His134.

This sequence belongs to the WrbA family. FMN is required as a cofactor.

The enzyme catalyses a quinone + NADH + H(+) = a quinol + NAD(+). The catalysed reaction is a quinone + NADPH + H(+) = a quinol + NADP(+). In Caulobacter vibrioides (strain ATCC 19089 / CIP 103742 / CB 15) (Caulobacter crescentus), this protein is NAD(P)H dehydrogenase (quinone).